The primary structure comprises 172 residues: Transmembrane protein 91 (172 aa).

2 disordered regions span residues 1–31 (MDSP…RHEL) and 55–83 (PSVS…DWDG). The Extracellular portion of the chain corresponds to 1 to 97 (MDSPSLRELQ…SPFLPHDHLG (97 aa)). Positions 69–81 (VEDMSSSDSDSDW) are enriched in acidic residues. The chain crosses the membrane as a helical span at residues 98-118 (LAVFSMLCCFWPVGIAAFCLA). Residues 119-139 (QKTNKAWAKGDIQGAGAASRR) are Cytoplasmic-facing. A helical transmembrane segment spans residues 140-160 (AFLLGVLAVGLGVCTYAAALV). Residues 161–172 (TLAAYLASRDPP) are Extracellular-facing.

Belongs to the CD225/Dispanin family.

Its subcellular location is the membrane. In Homo sapiens (Human), this protein is Transmembrane protein 91 (TMEM91).